Reading from the N-terminus, the 290-residue chain is ATP synthase gamma chain (290 aa).

This sequence belongs to the ATPase gamma chain family. F-type ATPases have 2 components, CF(1) - the catalytic core - and CF(0) - the membrane proton channel. CF(1) has five subunits: alpha(3), beta(3), gamma(1), delta(1), epsilon(1). CF(0) has three main subunits: a, b and c.

It is found in the cell membrane. Produces ATP from ADP in the presence of a proton gradient across the membrane. The gamma chain is believed to be important in regulating ATPase activity and the flow of protons through the CF(0) complex. The sequence is that of ATP synthase gamma chain from Heliobacterium modesticaldum (strain ATCC 51547 / Ice1).